We begin with the raw amino-acid sequence, 235 residues long: Thaumatin II (235 aa).

The first 22 residues, methionine 1–alanine 22, serve as a signal peptide directing secretion. Cystine bridges form between cysteine 31–cysteine 226, cysteine 78–cysteine 88, cysteine 93–cysteine 99, cysteine 143–cysteine 215, cysteine 148–cysteine 199, cysteine 156–cysteine 167, cysteine 171–cysteine 180, and cysteine 181–cysteine 186. A propeptide spans leucine 230–glutamate 235 (removed in mature form).

The protein belongs to the thaumatin family.

The protein resides in the cytoplasmic vesicle. Its function is as follows. Taste-modifying protein; intensely sweet-tasting. It is 100000 times sweeter than sucrose on a molar basis. The polypeptide is Thaumatin II (Thaumatococcus daniellii (Katemfe)).